A 322-amino-acid polypeptide reads, in one-letter code: Protein mono-ADP-ribosyltransferase PARP16 (322 aa).

Residues 1-287 (MQLSNRAAAR…RASSQLSWLS (287 aa)) are Cytoplasmic-facing. The 87-residue stretch at 5-91 (NRAAAREAAS…AWDLVSWILS (87 aa)) folds into the PARP alpha-helical domain. The PARP catalytic domain occupies 94 to 279 (ILTIHSAKKA…VYSQKQPKRA (186 aa)). Residues histidine 152, tyrosine 182, and tyrosine 254 each coordinate NAD(+). A helical transmembrane segment spans residues 288 to 308 (SHWFVIMMSLYLLLLLIVSVT). At 309 to 322 (NSSVFHHFWNRVKR) the chain is on the lumenal side.

This sequence belongs to the ARTD/PARP family. As to quaternary structure, interacts with KPNB1. In terms of processing, auto-mono-ADP-ribosylated.

The protein localises to the endoplasmic reticulum membrane. The enzyme catalyses L-aspartyl-[protein] + NAD(+) = 4-O-(ADP-D-ribosyl)-L-aspartyl-[protein] + nicotinamide. It catalyses the reaction L-lysyl-[protein] + NAD(+) = N(6)-(ADP-D-ribosyl)-L-lysyl-[protein] + nicotinamide + H(+). It carries out the reaction L-glutamyl-[protein] + NAD(+) = 5-O-(ADP-D-ribosyl)-L-glutamyl-[protein] + nicotinamide. Its activity is regulated as follows. In absence of activation signal, PARP16 is autoinhibited by the PARP alpha-helical domain (also named HD region), which prevents effective NAD(+)-binding. Activity is highly stimulated by signals, which unfold the PARP alpha-helical domain, relieving autoinhibition. Its function is as follows. Intracellular mono-ADP-ribosyltransferase that plays a role in different processes, such as protein translation and unfolded protein response (UPR), through the mono-ADP-ribosylation of proteins involved in those processes. Acts as an inhibitor of protein translation by catalyzing mono-ADP-ribosylation of ribosomal subunits, such as RPL14 and RPS6, thereby inhibiting polysome assembly and mRNA loading. Mono-ADP-ribosylation of ribosomal subunits is promoted by NMNAT2. Involved in the unfolded protein response (UPR) by ADP-ribosylating and activating EIF2AK3 and ERN1, two important UPR effectors. May also mediate mono-ADP-ribosylation of karyopherin KPNB1 a nuclear import factor. May not modify proteins on arginine or cysteine residues compared to other mono-ADP-ribosyltransferases. This chain is Protein mono-ADP-ribosyltransferase PARP16, found in Mus musculus (Mouse).